Here is a 122-residue protein sequence, read N- to C-terminus: Riboflavin kinase (122 aa).

4-9 (GFGEGA) lines the CDP pocket. T33 and N35 together coordinate Mg(2+). FMN-binding residues include T84 and E92. 97–100 (VNLR) contributes to the CDP binding site.

It belongs to the archaeal riboflavin kinase family. The cofactor is Mg(2+).

The catalysed reaction is riboflavin + CTP = CDP + FMN + H(+). It functions in the pathway cofactor biosynthesis; FMN biosynthesis; FMN from riboflavin (CTP route): step 1/1. Its function is as follows. Catalyzes the CTP-dependent phosphorylation of riboflavin (vitamin B2) to form flavin mononucleotide (FMN). The chain is Riboflavin kinase from Methanothermobacter thermautotrophicus (strain ATCC 29096 / DSM 1053 / JCM 10044 / NBRC 100330 / Delta H) (Methanobacterium thermoautotrophicum).